Here is a 648-residue protein sequence, read N- to C-terminus: MSRRGDRPRTPAQPRKKARVDQPRSARTRRTRVSEAEAGLRSSSFVFRHRTGNLAILAVLVIAAVQLFMLQVPRAAGLRAEAASQLKVTDITPAIRGSIIDRNNDKLAFTIEARALTFQPTRVRKQLDEAWRKAQEAGSSTSDDVPNPDERLNEIAKEIAARLNNTPDAKTVLKKLKSNETFVYLARAVDPAIANAITDKFPEVGSERQDLRQYPGGSLAANIVGGIDWDGHGLLGLEDSLDAVLAGTDGSVTYDRGSDGVVIPGSYRNRHDAVDGSTVQLTIDDDIQYHVQQQVQMAKDASGAKNVSAVVLDAKTGEVLAMSNDNTFDPSQDIGRQADRQMGNPSVSSPFEPGSVNKIVTAAAAIENGLTNPDEVLQVPGSIHMGGVTVRDAWNHGVMPYTTTGVFGKSSNVGTLMLAQRVGPERFYEMLRKFGLGQRTNVGLPGESSGLLPPIDQWSGSSFSNLPIGQGLSMTLLQMAAMYQTVANDGVRVPPRIIKSTIAPDGTVTEEERPEGIRVISPETARTLRSMFRSVVQRDPMGVQQGTGPQAAVEGYQIAGKTGTAQQINPACGCYYDDVYWITFAGIAPADDPRYVIGIMMDAPQRAADGSPGSSAAPLFHEIASWLLQRHNVPLSPDPGPPLTLQAT.

A disordered region spans residues 1–35 (MSRRGDRPRTPAQPRKKARVDQPRSARTRRTRVSE). A helical membrane pass occupies residues 52 to 72 (GNLAILAVLVIAAVQLFMLQV). Ser355 acts as the Acyl-ester intermediate in catalysis.

It belongs to the transpeptidase family. In terms of assembly, interacts with Wag31.

The protein resides in the cell membrane. This Mycolicibacterium smegmatis (strain ATCC 700084 / mc(2)155) (Mycobacterium smegmatis) protein is Penicillin-binding protein PbpB (pbpB).